The primary structure comprises 69 residues: UPF0337 protein YjbJ (69 aa).

The protein belongs to the UPF0337 (CsbD) family.

The protein is UPF0337 protein YjbJ (yjbJ) of Escherichia coli O157:H7.